Consider the following 61-residue polypeptide: Small ribosomal subunit protein uS14 (61 aa).

The Zn(2+) site is built by C24, C27, C40, and C43.

It belongs to the universal ribosomal protein uS14 family. Zinc-binding uS14 subfamily. Part of the 30S ribosomal subunit. Contacts proteins S3 and S10. It depends on Zn(2+) as a cofactor.

Functionally, binds 16S rRNA, required for the assembly of 30S particles and may also be responsible for determining the conformation of the 16S rRNA at the A site. This is Small ribosomal subunit protein uS14 from Herpetosiphon aurantiacus (strain ATCC 23779 / DSM 785 / 114-95).